A 501-amino-acid polypeptide reads, in one-letter code: ATP synthase subunit alpha (501 aa).

Residue 169-176 (GDRQTGKT) coordinates ATP.

The protein belongs to the ATPase alpha/beta chains family. In terms of assembly, F-type ATPases have 2 components, CF(1) - the catalytic core - and CF(0) - the membrane proton channel. CF(1) has five subunits: alpha(3), beta(3), gamma(1), delta(1), epsilon(1). CF(0) has three main subunits: a(1), b(2) and c(9-12). The alpha and beta chains form an alternating ring which encloses part of the gamma chain. CF(1) is attached to CF(0) by a central stalk formed by the gamma and epsilon chains, while a peripheral stalk is formed by the delta and b chains.

The protein localises to the cell membrane. The enzyme catalyses ATP + H2O + 4 H(+)(in) = ADP + phosphate + 5 H(+)(out). Its function is as follows. Produces ATP from ADP in the presence of a proton gradient across the membrane. The alpha chain is a regulatory subunit. The sequence is that of ATP synthase subunit alpha from Streptococcus pneumoniae (strain Hungary19A-6).